Reading from the N-terminus, the 153-residue chain is Large ribosomal subunit protein uL13 (153 aa).

Belongs to the universal ribosomal protein uL13 family. As to quaternary structure, part of the 50S ribosomal subunit.

In terms of biological role, this protein is one of the early assembly proteins of the 50S ribosomal subunit, although it is not seen to bind rRNA by itself. It is important during the early stages of 50S assembly. This chain is Large ribosomal subunit protein uL13, found in Methylobacterium sp. (strain 4-46).